A 120-amino-acid polypeptide reads, in one-letter code: Large ribosomal subunit protein bL20 (120 aa).

It belongs to the bacterial ribosomal protein bL20 family.

In terms of biological role, binds directly to 23S ribosomal RNA and is necessary for the in vitro assembly process of the 50S ribosomal subunit. It is not involved in the protein synthesizing functions of that subunit. The chain is Large ribosomal subunit protein bL20 from Karelsulcia muelleri (strain GWSS) (Sulcia muelleri).